Reading from the N-terminus, the 268-residue chain is Putative ABC transporter ATP-binding protein MK0182 (268 aa).

An ABC transporter domain is found at 1–229; the sequence is MTHEYPDGTC…VDLIRESGLK (229 aa). 29 to 36 contacts ATP; the sequence is GPNGSGKT.

It belongs to the ABC transporter superfamily.

Its subcellular location is the cell membrane. Functionally, probably part of an ABC transporter complex. Responsible for energy coupling to the transport system. The sequence is that of Putative ABC transporter ATP-binding protein MK0182 from Methanopyrus kandleri (strain AV19 / DSM 6324 / JCM 9639 / NBRC 100938).